The sequence spans 559 residues: Suppressor of tumorigenicity 7 protein-like (559 aa).

3 helical membrane passes run 39 to 59 (GLAN…LYAL), 83 to 103 (FYVA…IFEW), and 513 to 533 (LPFF…IALL).

It belongs to the ST7 family.

It is found in the membrane. The protein is Suppressor of tumorigenicity 7 protein-like (St7l) of Rattus norvegicus (Rat).